A 666-amino-acid polypeptide reads, in one-letter code: MASVFKIHSAYQPAGDQVKAIQNIADSFQKGEKKVTLVGVTGSGKTFTMAQVIQNLGLPTLVLSHNKTLAAQLFREFKEFFPENAVEYFVSYYDYYQPEAYVPSSDTFIEKDSSINEEIDKLRLRATSSLLEREDVVIVSSVSCIYGLGSPEEYTNSVVALKVGDTIERDTVIRKLLHIQYNRNDLDFSRGNFRVRGDSIEIYPAYHTDGIRIEFFGDEIDSISRINPVTAQTIFKLEKAYIYPAKHFITSGPKVKEAVENIRAEVDAQTDFFRKNNKLLEAERILSRTNYDMEMLQEMGYCNGIENYSRHLTGRKPGERPACLIDYFQGEFLLIVDESHVTIPQIGGMFAGDRARKQTLVDFGFRLPSALDNRPLNFQEFETLTPRTLYVSATPAEYEIEKSSKVVEQIIRPTGLLDPIVDVRPTKNQIEDLLVEIRKRIDAGERVLVTTLTKKMSEDLTDYYEEIGLKVAYLHSEVETLDRVGIIRDLRKGIYDVLIGINLLREGLDIPEVSLVAILDADKEGFLRNYKSLIQTIGRAARNVNGTAILYADKTTDSMAKAIEETKRRRKIQEDHNLKFGITPLTIKKEVGDIIEREEKERTSEDLVLEDVEKKFNSKKFPNKEVLKEKLREEMMKAAKELDFERAAILRDKMLSIQTEDSSAKN.

The 389-residue stretch at 26 to 414 (DSFQKGEKKV…KVVEQIIRPT (389 aa)) folds into the Helicase ATP-binding domain. 39–46 (GVTGSGKT) is a binding site for ATP. Residues 92–115 (YYDYYQPEAYVPSSDTFIEKDSSI) carry the Beta-hairpin motif. Residues 429 to 591 (QIEDLLVEIR…ITPLTIKKEV (163 aa)) enclose the Helicase C-terminal domain. One can recognise a UVR domain in the interval 625–660 (EVLKEKLREEMMKAAKELDFERAAILRDKMLSIQTE).

It belongs to the UvrB family. In terms of assembly, forms a heterotetramer with UvrA during the search for lesions. Interacts with UvrC in an incision complex.

It localises to the cytoplasm. In terms of biological role, the UvrABC repair system catalyzes the recognition and processing of DNA lesions. A damage recognition complex composed of 2 UvrA and 2 UvrB subunits scans DNA for abnormalities. Upon binding of the UvrA(2)B(2) complex to a putative damaged site, the DNA wraps around one UvrB monomer. DNA wrap is dependent on ATP binding by UvrB and probably causes local melting of the DNA helix, facilitating insertion of UvrB beta-hairpin between the DNA strands. Then UvrB probes one DNA strand for the presence of a lesion. If a lesion is found the UvrA subunits dissociate and the UvrB-DNA preincision complex is formed. This complex is subsequently bound by UvrC and the second UvrB is released. If no lesion is found, the DNA wraps around the other UvrB subunit that will check the other stand for damage. The protein is UvrABC system protein B of Leptospira interrogans serogroup Icterohaemorrhagiae serovar copenhageni (strain Fiocruz L1-130).